The primary structure comprises 355 residues: Uroporphyrinogen decarboxylase (355 aa).

Substrate is bound by residues 27–31, D77, Y154, T209, and H328; that span reads RQAGR.

The protein belongs to the uroporphyrinogen decarboxylase family. Homodimer.

The protein resides in the cytoplasm. It catalyses the reaction uroporphyrinogen III + 4 H(+) = coproporphyrinogen III + 4 CO2. The protein operates within porphyrin-containing compound metabolism; protoporphyrin-IX biosynthesis; coproporphyrinogen-III from 5-aminolevulinate: step 4/4. In terms of biological role, catalyzes the decarboxylation of four acetate groups of uroporphyrinogen-III to yield coproporphyrinogen-III. The polypeptide is Uroporphyrinogen decarboxylase (Vibrio campbellii (strain ATCC BAA-1116)).